The following is a 371-amino-acid chain: MPGCPCPGCGMAGPRLLFLTALALELLERAGGSQPALRSRGTATACRLDNKESESWGALLSGERLDTWICSLLGSLMVGLSGVFPLLVIPLEMGTMLRSEAGAWRLKQLLSFALGGLLGNVFLHLLPEAWAYTCSASPGGEGQSLQQQQQLGLWVIAGILTFLALEKMFLDSKEEGTSQAPNKDPTAAAAALNGGHCLAQPAAEPGLGAVVRSIKVSGYLNLLANTIDNFTHGLAVAASFLVSKKIGLLTTMAILLHEIPHEVGDFAILLRAGFDRWSAAKLQLSTALGGLLGAGFAICTQSPKGVVGCSPAAEETAAWVLPFTSGGFLYIALVNVLPDLLEEEDPWRSLQQLLLLCAGIVVMVLFSLFVD.

Residues 1-7 lie on the Lumenal side of the membrane; it reads MPGCPCP. Residues 8–28 form a helical membrane-spanning segment; it reads GCGMAGPRLLFLTALALELLE. Topologically, residues 29 to 68 are cytoplasmic; the sequence is RAGGSQPALRSRGTATACRLDNKESESWGALLSGERLDTW. Residues 69-89 form a helical membrane-spanning segment; sequence ICSLLGSLMVGLSGVFPLLVI. The Lumenal portion of the chain corresponds to 90–108; the sequence is PLEMGTMLRSEAGAWRLKQ. Residues 109–129 form a helical membrane-spanning segment; sequence LLSFALGGLLGNVFLHLLPEA. Over 130-149 the chain is Cytoplasmic; sequence WAYTCSASPGGEGQSLQQQQ. A helical transmembrane segment spans residues 150 to 170; it reads QLGLWVIAGILTFLALEKMFL. Residues 171–235 are Lumenal-facing; that stretch reads DSKEEGTSQA…TIDNFTHGLA (65 aa). Residues 236–256 form a helical membrane-spanning segment; that stretch reads VAASFLVSKKIGLLTTMAILL. The short motif at 257–262 is the XEXPHE-motif element; sequence HEIPHE. Topologically, residues 257-278 are cytoplasmic; it reads HEIPHEVGDFAILLRAGFDRWS. The chain crosses the membrane as a helical span at residues 279-299; it reads AAKLQLSTALGGLLGAGFAIC. Over 300 to 316 the chain is Lumenal; it reads TQSPKGVVGCSPAAEET. Residues 317–337 traverse the membrane as a helical segment; sequence AAWVLPFTSGGFLYIALVNVL. At 338–349 the chain is on the cytoplasmic side; the sequence is PDLLEEEDPWRS. Residues 350 to 370 traverse the membrane as a helical segment; that stretch reads LQQLLLLCAGIVVMVLFSLFV. Aspartate 371 is a topological domain (lumenal).

This sequence belongs to the ZIP transporter (TC 2.A.5) family. In terms of assembly, homodimer.

It is found in the golgi apparatus membrane. Its subcellular location is the cytoplasmic vesicle membrane. It localises to the endoplasmic reticulum membrane. The enzyme catalyses Zn(2+)(in) = Zn(2+)(out). Its function is as follows. Functions as a zinc transporter transporting Zn(2+) from the Golgi apparatus to the cytosol and thus influences the zinc level at least in areas of the cytosol. May regulate beige adipocyte differentiation. The sequence is that of Zinc transporter ZIP13 from Homo sapiens (Human).